Consider the following 38-residue polypeptide: Large ribosomal subunit protein bL36 (38 aa).

The protein belongs to the bacterial ribosomal protein bL36 family.

This chain is Large ribosomal subunit protein bL36, found in Phytoplasma mali (strain AT).